Reading from the N-terminus, the 212-residue chain is Ribosomal RNA small subunit methyltransferase G (212 aa).

Residues Gly73, 127–128 (IE), and Arg143 contribute to the S-adenosyl-L-methionine site.

Belongs to the methyltransferase superfamily. RNA methyltransferase RsmG family.

It is found in the cytoplasm. The enzyme catalyses guanosine(527) in 16S rRNA + S-adenosyl-L-methionine = N(7)-methylguanosine(527) in 16S rRNA + S-adenosyl-L-homocysteine. Functionally, specifically methylates the N7 position of guanine in position 527 of 16S rRNA. The polypeptide is Ribosomal RNA small subunit methyltransferase G (Methylobacterium nodulans (strain LMG 21967 / CNCM I-2342 / ORS 2060)).